Consider the following 139-residue polypeptide: Actin-depolymerizing factor 3 (139 aa).

The ADF-H domain occupies 5-139 (ASGMAVHDDC…DLDVFKSRAN (135 aa)). The residue at position 6 (Ser-6) is a Phosphoserine.

It belongs to the actin-binding proteins ADF family.

Its subcellular location is the cytoplasm. The protein resides in the cytoskeleton. In terms of biological role, actin-depolymerizing protein. Severs actin filaments (F-actin) and binds to actin monomers. This chain is Actin-depolymerizing factor 3 (ADF3), found in Arabidopsis thaliana (Mouse-ear cress).